The chain runs to 88 residues: Sec-independent protein translocase protein TatA (88 aa).

The chain crosses the membrane as a helical span at residues 3 to 23 (IFGVGLPEVTVILILALLIFG). Basic and acidic residues predominate over residues 56-66 (MKEEDKDESPK). The interval 56–88 (MKEEDKDESPKSIESNQSNEINQEKIDSENSNN) is disordered. The segment covering 67 to 76 (SIESNQSNEI) has biased composition (polar residues). Positions 77–88 (NQEKIDSENSNN) are enriched in basic and acidic residues.

It belongs to the TatA/E family. In terms of assembly, forms a complex with TatC.

The protein resides in the cell inner membrane. Part of the twin-arginine translocation (Tat) system that transports large folded proteins containing a characteristic twin-arginine motif in their signal peptide across membranes. TatA could form the protein-conducting channel of the Tat system. This is Sec-independent protein translocase protein TatA from Prochlorococcus marinus (strain MIT 9301).